We begin with the raw amino-acid sequence, 1483 residues long: Protein ORF C (1483 aa).

Disordered regions lie at residues 135–268 (LNDR…GRPP), 306–334 (VPYQ…LRPV), 383–506 (RRRA…FKRH), 518–653 (SIDD…DRNR), 680–911 (RQRR…TSVS), 949–976 (SSDD…RGGS), 1013–1061 (ALQQ…TDLI), and 1089–1299 (FSVA…QPSD). The span at 141-153 (AAGSAQRGSAGSR) shows a compositional bias: low complexity. Polar residues predominate over residues 157-170 (DNLTPTAADTTGAQ). 2 stretches are compositionally biased toward low complexity: residues 190–206 (ASNV…RRQQ) and 220–251 (ARQQ…TTAT). Residues 252–264 (RQVFEQQGPSTIQ) show a composition bias toward polar residues. 3 stretches are compositionally biased toward low complexity: residues 424 to 449 (SGQS…TTGT), 474 to 483 (SNEPSRQSQS), and 529 to 541 (TMTQ…STTR). Polar residues predominate over residues 596-607 (GSVTTTQPSGQL). Basic and acidic residues predominate over residues 609–621 (SDDRGRPAPERRQ). A compositionally biased stretch (polar residues) spans 622 to 640 (QPTSRQTVAQTNIIPNTSG). Positions 680–689 (RQRRETEAEH) are enriched in basic and acidic residues. Residues 699 to 710 (TGVTPQRSNNPF) are compositionally biased toward polar residues. Over residues 740 to 749 (SLREYRRRDP) the composition is skewed to basic and acidic residues. The span at 754–774 (GRSYTDGSTTSDGDSSDNSWS) shows a compositional bias: low complexity. Residues 841 to 876 (NLKSPSPRTKLTRSSSLKSPGTTTRDTQQTSHPLTR) show a composition bias toward polar residues. Low complexity predominate over residues 894 to 909 (DSGGSSDGNTGSSQTS). Polar residues-rich tracts occupy residues 1096 to 1109 (GSTS…SSIP) and 1116 to 1125 (GPSTMTSQSV). Over residues 1148–1158 (SQSQPSSEQPA) the composition is skewed to low complexity. The segment covering 1188–1202 (QPQSTVTNTQTQDVL) has biased composition (polar residues). Composition is skewed to low complexity over residues 1204-1226 (SQGS…KTGS) and 1233-1251 (KSAL…SGKS). Positions 1258-1276 (AASSTDPTTKPTRKVSINA) are enriched in polar residues. Residues 1284–1299 (KSSTKQSTKTSTQPSD) show a composition bias toward low complexity. Residues 1408-1438 (AEQIRNLEVDELKILRQQVRERIANERQQQD) adopt a coiled-coil conformation. The interval 1454 to 1483 (DMLVSEESAAPTPLPMDTGRFTPKSDVDMS) is disordered.

In Elephantid herpesvirus 1 (isolate Asian elephant/Berlin/Kiba/1998) (EIHV-1), this protein is Protein ORF C.